A 266-amino-acid polypeptide reads, in one-letter code: Type III pantothenate kinase (266 aa).

15 to 22 provides a ligand contact to ATP; sequence EIGNSSTS. Residues Tyr105 and 112 to 115 contribute to the substrate site; that span reads GADR. Asp114 serves as the catalytic Proton acceptor. Residue Asp135 participates in K(+) binding. An ATP-binding site is contributed by Thr138. Residue Thr191 participates in substrate binding.

It belongs to the type III pantothenate kinase family. As to quaternary structure, homodimer. Requires NH4(+) as cofactor. The cofactor is K(+).

The protein localises to the cytoplasm. It catalyses the reaction (R)-pantothenate + ATP = (R)-4'-phosphopantothenate + ADP + H(+). The protein operates within cofactor biosynthesis; coenzyme A biosynthesis; CoA from (R)-pantothenate: step 1/5. In terms of biological role, catalyzes the phosphorylation of pantothenate (Pan), the first step in CoA biosynthesis. The polypeptide is Type III pantothenate kinase (Chlorobium chlorochromatii (strain CaD3)).